The following is a 601-amino-acid chain: Keratin, type II cytoskeletal 5 (601 aa).

The head stretch occupies residues methionine 1 to glutamate 168. A phosphoserine mark is found at serine 5, serine 8, serine 16, and serine 21. The residue at position 24 (threonine 24) is a Phosphothreonine; by CDK1. Phosphoserine occurs at positions 26, 36, 50, 64, 71, and 75. A Phosphothreonine; by CDK1 modification is found at threonine 152. Phosphothreonine; by AURKB is present on threonine 167. The interval glutamate 169–leucine 204 is coil 1A. One can recognise an IF rod domain in the interval glutamate 169 to leucine 482. The segment at glutamine 205 to tyrosine 223 is linker 1. Residues isoleucine 224–glutamine 316 form a coil 1B region. The interval threonine 317–isoleucine 339 is linker 12. The coil 2 stretch occupies residues isoleucine 340 to glutamate 478. The interval glutamate 479–serine 601 is tail. Positions phenylalanine 576–serine 601 are disordered. Low complexity predominate over residues serine 583–serine 601.

Belongs to the intermediate filament family. Heterodimer of a type I and a type II keratin. Heterodimer with type I keratin KRT25 leading to the formation of keratin intermediate filament (KIF) network. Forms a heterodimer (via 2B domains) with KRT14 (via 2B domains). Interacts with TCHP. Interacts with EPPK1. Interacts with AMELX. Interacts with PKP1 (via N-terminus) and PKP2. Phosphorylated by CDK1, AURKB and Rho-kinase, phosphorylation is regulated by the cell cycle. Thr-24 phosphorylation, mediated by CDK1, peaks during prometaphase or metaphase cells with phosphorylated filamentous structures evident throughout the cytoplasm early mitosis. CDK1 phosphorylates Thr-24 in mitotic cells at the site of injury. In terms of processing, O-glycosylated.

Its subcellular location is the cytoplasm. Its function is as follows. Required for the formation of keratin intermediate filaments in the basal epidermis and maintenance of the skin barrier in response to mechanical stress. Regulates the recruitment of Langerhans cells to the epidermis, potentially by modulation of the abundance of macrophage chemotactic cytokines, macrophage inflammatory cytokines and CTNND1 localization in keratinocytes. The sequence is that of Keratin, type II cytoskeletal 5 from Bos taurus (Bovine).